Reading from the N-terminus, the 1043-residue chain is MGVQGFQEYMEKHCPSAVVPVELQKLARGSLVGGGRQRPPQSPLRLLVDAENCLHRLYGGFYTDWVSGGQWNHMLGYLGALAKACYAGNIQLFVFFNGALEKGRLHEWVKRQGNERQTAQQIVSHIQNKGTPPPKVWFLPPICMAHCIRLALLRFHIKVAQSIEDHHQEVITFCRENGFHGLVAYDSDYALCNIPYYFSAHALKLSRNGKSLTTSQYLMHEVAKQLDLNPNRFPIFAALLGNHILPDEDLAAFHWSLLGPEHPLASLKVRAHQLVLPPCDVVIKAVADYVRNIQDTNDLDAIAKDVFQHSQSRTDDKVSRFKKAIAYYRATNKPLSCPPAHYLGRPNPGGIHSMVPPYPSPQMLNIPQGSVQSRPMTGGKCVSEQNNYSNIPHEGKHTPLYERSSPINPAQSGSPNHVDSNYFPPSSASSSSENEDGNGGSANHVSGNKPTWDKGKKSEKANKKDSTEQAKAEVPSPSGSGNKGTDKKANQPGHMQIPCLLSMPTRNHMDITTPPLPQVAPEVLRVAEHRHKKGLMYPYIFHVLTKGEMKIPVTIEDEINKDLPPAAILYRPVRQYVYGVLFSLAESRKKAERLAFRKNRMPPEFYVPDYPVIIKEWAAYKGKSPQTPELVEALAFREWTCPNLKKLWLGKAVEDKNRRMRAFLACMRSDTPAMLNPANVPTHLMVLCCVLRYMVQWPGIRILRRQELDAFLAQAISPKLYEPDQLQELKIDNLDPRGIQLSALFMSGVDMAFLANDACGQPIPWEHCCPWMYFDGKLLQAKLNKATREKASLIDLCDGQVELATKVEKMRQSILEGLHFSRQNHPLPFPPPPAMPFYPAAMYPRPCGPMPPPQGRGRGFPGVQPMPSQGGKLEIAGTVVGQWAGTRRGRGRGPFPLQVVSVGGANRGRPRGVISTPIIRTFGRGGRYYGRGFKNQGPPQAKPPYATSAEEVAKELKTQSEDSKSSAVSSDGSLAENGLASEEAPASQMNGGSGEARASSNSESALSSDSKLCNTNPHLNALNADSVRHKEQPLEGAVANKEE.

Disordered stretches follow at residues 353-497 and 929-1043; these read SMVP…HMQI and YGRG…NKEE. 2 stretches are compositionally biased toward polar residues: residues 362 to 375 and 405 to 419; these read QMLN…QSRP and SPIN…NHVD. Basic and acidic residues-rich tracts occupy residues 451-471 and 951-964; these read TWDK…EQAK and EVAK…EDSK. The tract at residues 801–1043 is RNA binding; it reads VELATKVEKM…LEGAVANKEE (243 aa). The segment covering 995-1010 has biased composition (low complexity); it reads EARASSNSESALSSDS.

The protein belongs to the constitutive coactivator of PPAR-gamma family.

It is found in the cytoplasm. Its subcellular location is the cell membrane. In terms of biological role, may bee involved in the oxidative stress-induced survival signaling. Binds RNA. May participate in mRNA transport in the cytoplasm. This Xenopus tropicalis (Western clawed frog) protein is Constitutive coactivator of PPAR-gamma-like protein 1 homolog (fam120a).